A 239-amino-acid polypeptide reads, in one-letter code: Glycerol-3-phosphate acyltransferase (239 aa).

A run of 6 helical transmembrane segments spans residues A6 to F26, F61 to I81, Y99 to F119, L135 to I155, V159 to L179, and W199 to L219.

The protein belongs to the PlsY family. In terms of assembly, probably interacts with PlsX.

It localises to the cell membrane. The catalysed reaction is an acyl phosphate + sn-glycerol 3-phosphate = a 1-acyl-sn-glycero-3-phosphate + phosphate. It participates in lipid metabolism; phospholipid metabolism. Functionally, catalyzes the transfer of an acyl group from acyl-phosphate (acyl-PO(4)) to glycerol-3-phosphate (G3P) to form lysophosphatidic acid (LPA). This enzyme utilizes acyl-phosphate as fatty acyl donor, but not acyl-CoA or acyl-ACP. In Mycoplasma pneumoniae (strain ATCC 29342 / M129 / Subtype 1) (Mycoplasmoides pneumoniae), this protein is Glycerol-3-phosphate acyltransferase.